The sequence spans 333 residues: Lipoyl synthase (333 aa).

Positions 55, 60, 66, 81, 85, 88, and 292 each coordinate [4Fe-4S] cluster. Residues 67–281 form the Radical SAM core domain; that stretch reads WEDREATFLI…SAEAERLGFA (215 aa).

The protein belongs to the radical SAM superfamily. Lipoyl synthase family. [4Fe-4S] cluster is required as a cofactor.

It is found in the cytoplasm. The catalysed reaction is [[Fe-S] cluster scaffold protein carrying a second [4Fe-4S](2+) cluster] + N(6)-octanoyl-L-lysyl-[protein] + 2 oxidized [2Fe-2S]-[ferredoxin] + 2 S-adenosyl-L-methionine + 4 H(+) = [[Fe-S] cluster scaffold protein] + N(6)-[(R)-dihydrolipoyl]-L-lysyl-[protein] + 4 Fe(3+) + 2 hydrogen sulfide + 2 5'-deoxyadenosine + 2 L-methionine + 2 reduced [2Fe-2S]-[ferredoxin]. The protein operates within protein modification; protein lipoylation via endogenous pathway; protein N(6)-(lipoyl)lysine from octanoyl-[acyl-carrier-protein]: step 2/2. Catalyzes the radical-mediated insertion of two sulfur atoms into the C-6 and C-8 positions of the octanoyl moiety bound to the lipoyl domains of lipoate-dependent enzymes, thereby converting the octanoylated domains into lipoylated derivatives. In Kineococcus radiotolerans (strain ATCC BAA-149 / DSM 14245 / SRS30216), this protein is Lipoyl synthase.